The sequence spans 569 residues: Myotubularin-related protein 9 (569 aa).

The Myotubularin phosphatase domain maps to 134 to 513 (GWSAFDLEQE…QCIKIWDRLF (380 aa)).

It belongs to the protein-tyrosine phosphatase family. Non-receptor class myotubularin subfamily. In terms of assembly, heterodimer with lipid phosphatase mtm-6.

The protein resides in the cytoplasm. It is found in the membrane. In terms of biological role, may act as a regulatory subunit for mtm-6. In association with phosphatase mtm-6, plays a role in endosome trafficking probably by regulating phosphatidylinositol-3-phosphate levels. Regulates fluid phase endocytosis in coelomocytes. Regulates posterior migration of QL neuroblast descendants and the anterior migration of QR neuroblast descendants and HSN neurons during larval development probably by controlling Wnt ligand secretion through the regulation of sorting receptor mig-14 trafficking. Involved in the formation of correct synapse number in DA9 motor neurons. This is Myotubularin-related protein 9 from Caenorhabditis elegans.